A 698-amino-acid chain; its full sequence is Endogenous retrovirus group K member 9 Env polyprotein (698 aa).

Positions 1–47 are disordered; it reads MNPSEMQRKAPPRRRRHRNRAPLTHKMNKMVTSEEQMKLPSTKKAEP. Residues 1–89 form the signal peptide; it reads MNPSEMQRKA…ALMIVSMVVS (89 aa). Basic residues predominate over residues 10-20; the sequence is APPRRRRHRNR. The Extracellular segment spans residues 90–631; the sequence is LPMPAGAAAA…NLNPVTWVKT (542 aa). N-linked (GlcNAc...) asparagine glycosylation is found at Asn-100, Asn-128, Asn-153, Asn-273, Asn-354, Asn-371, and Asn-460. The tract at residues 465–485 is fusion peptide; the sequence is FIFTLIAVIMGLIAVTATAAV. 4 N-linked (GlcNAc...) asparagine glycosylation sites follow: Asn-506, Asn-553, Asn-565, and Asn-584. A helical membrane pass occupies residues 632-652; that stretch reads IGSTTIINLILILVCLFCLLL. The Cytoplasmic portion of the chain corresponds to 653–698; that stretch reads VCRCTQQLRRDSDHRERAMMTMAVLSKRKGGNVGKSKRDQIVTVSV.

It belongs to the beta type-B retroviral envelope protein family. HERV class-II K(HML-2) env subfamily. The surface (SU) and transmembrane (TM) proteins form a heterodimer. SU and TM are attached by noncovalent interactions or by a labile interchain disulfide bond. Specific enzymatic cleavages in vivo yield the mature SU and TM proteins.

It is found in the cell membrane. Its subcellular location is the virion. Retroviral envelope proteins mediate receptor recognition and membrane fusion during early infection. Endogenous envelope proteins may have kept, lost or modified their original function during evolution. This endogenous envelope protein has lost its original fusogenic properties. In terms of biological role, SU mediates receptor recognition. Its function is as follows. TM anchors the envelope heterodimer to the viral membrane through one transmembrane domain. The other hydrophobic domain, called fusion peptide, mediates fusion of the viral membrane with the target cell membrane. The chain is Endogenous retrovirus group K member 9 Env polyprotein (ERVK-9) from Homo sapiens (Human).